Reading from the N-terminus, the 362-residue chain is Small ribosomal subunit protein uS4m (362 aa).

An S4 RNA-binding domain is found at 105–179 (TRFDVILLRL…FYKEILVEKI (75 aa)).

It belongs to the universal ribosomal protein uS4 family. In terms of assembly, component of the mitochondrial ribosome small subunit.

The protein localises to the mitochondrion. The polypeptide is Small ribosomal subunit protein uS4m (RPS4) (Arabidopsis thaliana (Mouse-ear cress)).